A 400-amino-acid polypeptide reads, in one-letter code: Elongation factor Tu (400 aa).

The region spanning 10–208 is the tr-type G domain; sequence KPHLNVGTIG…TMDSYFPEPQ (199 aa). The G1 stretch occupies residues 19 to 26; it reads GHIDHGKT. A GTP-binding site is contributed by 19-26; it reads GHIDHGKT. Thr26 provides a ligand contact to Mg(2+). Residues 60 to 64 form a G2 region; it reads GITIN. Residues 81-84 form a G3 region; the sequence is DCPG. GTP-binding positions include 81–85 and 136–139; these read DCPGH and NKTD. Residues 136 to 139 form a G4 region; the sequence is NKTD. The G5 stretch occupies residues 174 to 176; sequence SAL.

This sequence belongs to the TRAFAC class translation factor GTPase superfamily. Classic translation factor GTPase family. EF-Tu/EF-1A subfamily. In terms of assembly, monomer.

It is found in the cytoplasm. It carries out the reaction GTP + H2O = GDP + phosphate + H(+). In terms of biological role, GTP hydrolase that promotes the GTP-dependent binding of aminoacyl-tRNA to the A-site of ribosomes during protein biosynthesis. This is Elongation factor Tu from Thermosipho africanus (strain TCF52B).